A 376-amino-acid chain; its full sequence is MRDPAPSNSEMKRVIVGMSGGVDSSVSAVLLMEQGYQVEGLFMKNWEEDDGTEYCTAREDLADAQAVCDKIGIKLHTANFAAEYWDNVFEHFLEEYKAGRTPNPDILCNREIKFKAFLDYALMLGADLIATGHYVRRRDIDGRTELLKGLDPNKDQSYFLHAVGGEQIARTLFPVGELEKPEVRAIAEKHGLATAKKKDSTGICFIGERRFTDFLRQYLPAQPGEIKTTEGEVIGRHSGLMYHTIGQRQGLGIGGLKDASDDPWYVLVKDLDNNELIVGQGNDHPWLFSRALVSSEIYWVNPIDLSSPRKLTAKVRYRQGDQPCTLEKTADGYRATFDDPQRAVTPGQSVVFYDGEICLGGGVIEIAEPWTSKDKR.

ATP-binding positions include 17 to 24 (GMSGGVDS) and Met-43. The tract at residues 103–105 (NPD) is interaction with target base in tRNA. The active-site Nucleophile is the Cys-108. An intrachain disulfide couples Cys-108 to Cys-204. Gly-132 lines the ATP pocket. The tract at residues 154–156 (KDQ) is interaction with tRNA. The active-site Cysteine persulfide intermediate is Cys-204. Residues 316-317 (RY) form an interaction with tRNA region.

This sequence belongs to the MnmA/TRMU family.

The protein resides in the cytoplasm. The catalysed reaction is S-sulfanyl-L-cysteinyl-[protein] + uridine(34) in tRNA + AH2 + ATP = 2-thiouridine(34) in tRNA + L-cysteinyl-[protein] + A + AMP + diphosphate + H(+). In terms of biological role, catalyzes the 2-thiolation of uridine at the wobble position (U34) of tRNA, leading to the formation of s(2)U34. The protein is tRNA-specific 2-thiouridylase MnmA of Pseudomonas savastanoi pv. phaseolicola (strain 1448A / Race 6) (Pseudomonas syringae pv. phaseolicola (strain 1448A / Race 6)).